The primary structure comprises 327 residues: Beta-1,4-galactosyltransferase 7 (327 aa).

The Cytoplasmic segment spans residues 1-30 (MLPSRRKAAQLPWEDGRARLLPGGLRRKCS). Residues 31-51 (IFHLFIAFLLLVFFSLLWLQL) form a helical; Signal-anchor for type II membrane protein membrane-spanning segment. Topologically, residues 52–327 (SCSGDMAQVT…KTATPWCIFG (276 aa)) are lumenal. Residues 61-88 (TRGQGQETSGPPRACPPEPPPEHWEEDE) are disordered. UDP-alpha-D-galactose-binding positions include 100–104 (PFRER) and 139–141 (FNR). A glycan (N-linked (GlcNAc...) asparagine) is linked at N154. UDP-alpha-D-galactose is bound by residues 164-165 (VD), Y194, and W224. D165 is a Mn(2+) binding site. 226-229 (REDD) contacts N-acetyl-D-glucosamine. H257 is a Mn(2+) binding site. Residues 257–259 (HLH) and R266 contribute to the UDP-alpha-D-galactose site.

It belongs to the glycosyltransferase 7 family. Mn(2+) serves as cofactor.

The protein localises to the golgi apparatus. It localises to the golgi stack membrane. The catalysed reaction is 3-O-(beta-D-xylosyl)-L-seryl-[protein] + UDP-alpha-D-galactose = 3-O-(beta-D-galactosyl-(1-&gt;4)-beta-D-xylosyl)-L-seryl-[protein] + UDP + H(+). It functions in the pathway protein modification; protein glycosylation. Required for the biosynthesis of the tetrasaccharide linkage region of proteoglycans, especially for small proteoglycans in skin fibroblasts. The polypeptide is Beta-1,4-galactosyltransferase 7 (B4galt7) (Mus musculus (Mouse)).